A 148-amino-acid chain; its full sequence is FAD synthase (148 aa).

Residues 9–10 (TF), 14–17 (HPGH), N92, and Y119 each bind ATP.

The protein belongs to the archaeal FAD synthase family. As to quaternary structure, homodimer. It depends on a divalent metal cation as a cofactor.

The catalysed reaction is FMN + ATP + H(+) = FAD + diphosphate. Its pathway is cofactor biosynthesis; FAD biosynthesis; FAD from FMN: step 1/1. Its function is as follows. Catalyzes the transfer of the AMP portion of ATP to flavin mononucleotide (FMN) to produce flavin adenine dinucleotide (FAD) coenzyme. The protein is FAD synthase of Methanolacinia petrolearia (strain DSM 11571 / OCM 486 / SEBR 4847) (Methanoplanus petrolearius).